Reading from the N-terminus, the 203-residue chain is CASP-like protein 1B1 (203 aa).

At 1–24 the chain is on the cytoplasmic side; that stretch reads MALVNAEKPEVGSSPSSLGPRNKS. Residues 25-45 traverse the membrane as a helical segment; the sequence is WVLLMLRFVAFLATAAATIVM. Topologically, residues 46 to 76 are extracellular; the sequence is AANRETKTFVVATIGSTPIKATVTAKFQHTP. A helical membrane pass occupies residues 77 to 97; that stretch reads AFVFFVIANGMGSIHNLVMIA. At 98 to 114 the chain is on the cytoplasmic side; that stretch reads GDTFVRKFDYKGLRWVT. A helical membrane pass occupies residues 115–135; that stretch reads VAILDMLTAALISGGVNAAVF. The Extracellular portion of the chain corresponds to 136–165; it reads MAELGKNGNSHAKWNKICDRFGSFCDHGGA. Residues 166 to 186 traverse the membrane as a helical segment; that stretch reads AIIASFIGLLLMLVISIISII. At 187–203 the chain is on the cytoplasmic side; sequence KLLKPKSPLVDSHVLAP.

This sequence belongs to the Casparian strip membrane proteins (CASP) family. Homodimer and heterodimers.

It localises to the cell membrane. This is CASP-like protein 1B1 from Ricinus communis (Castor bean).